The chain runs to 1006 residues: GATA zinc finger domain-containing protein 7 (1006 aa).

The span at 55–70 (SSSNNFINNHHNNQSS) shows a compositional bias: low complexity. 5 disordered regions span residues 55 to 116 (SSSN…APNL), 128 to 248 (PFQN…DPFY), 381 to 499 (NAKK…PLST), 528 to 638 (STSG…SSNS), and 657 to 800 (YNSN…NYHD). The span at 71-86 (DIHSISQSTPNLSTLI) shows a compositional bias: polar residues. Composition is skewed to low complexity over residues 87–110 (SSSSNNNNNNNNNNSPNYSMNSSS) and 128–158 (PFQNQQQQQPTSEVSTNSANTSSENTTCNNS). The segment covering 159–168 (PVSSSTNYIP) has biased composition (polar residues). The segment covering 169–180 (NNSTSNVVLNSS) has biased composition (low complexity). Residues 181-190 (IPTTSPNVLS) are compositionally biased toward polar residues. 2 stretches are compositionally biased toward low complexity: residues 205-241 (NNNNINNNNINNNINNNNNNNNNNNNNNNNNNNNNNN) and 388-410 (TNTNNNNNNNNNNNNNNNNNNNN). Polar residues predominate over residues 411-426 (IQQANVNTSPISTSTT). Composition is skewed to low complexity over residues 427–456 (PNNNNNNQIQNQPQQIPQQQAQQQAQQQAQ) and 468–496 (SITPSISLTPTTVTSSSSTNSSGSIGASP). Residues 528-539 (STSGMLSTTNPY) show a composition bias toward polar residues. The span at 540–557 (THHSPNTSSTVSSSVTSP) shows a compositional bias: low complexity. Residues 558 to 589 (LINQYGTNPTLTNNHSFYGSLASNQNTGASDG) are compositionally biased toward polar residues. 2 stretches are compositionally biased toward low complexity: residues 590–601 (NNNNNNNNNNNN) and 619–638 (SSNPLNNNHNSNNVYNSSNS). The segment covering 662–680 (GSGMTTPQSLGHSPSHNDY) has biased composition (polar residues). Low complexity-rich tracts occupy residues 681–706 (NSNNNNNNNNNNNSNNNNSNNSNSNN) and 713–785 (SNSS…SSNN). Residues 842–867 (CHNCGTKNTPEWRRGPSGPATLCNAC) form a GATA-type zinc finger. A disordered region spans residues 925 to 957 (NNASSSSSSSSSSSSSSSSSSSTSSYSSSSYNI). Positions 928 to 954 (SSSSSSSSSSSSSSSSSSSTSSYSSSS) are enriched in low complexity.

The polypeptide is GATA zinc finger domain-containing protein 7 (gtaG) (Dictyostelium discoideum (Social amoeba)).